We begin with the raw amino-acid sequence, 561 residues long: Potassium-transporting ATPase potassium-binding subunit (561 aa).

10 consecutive transmembrane segments (helical) span residues 4–24, 65–85, 133–153, 177–197, 253–273, 285–305, 380–400, 417–437, 484–504, and 528–548; these read IVMQ…PLGI, AVSV…VLML, IGLT…LFAV, LYIL…QGVV, FTNL…VVMF, AIMT…TISE, GLYG…LLVG, MVCL…AVAV, MVGA…ALYL, and FIGL…LPAL.

The protein belongs to the KdpA family. In terms of assembly, the system is composed of three essential subunits: KdpA, KdpB and KdpC.

It localises to the cell membrane. Its function is as follows. Part of the high-affinity ATP-driven potassium transport (or Kdp) system, which catalyzes the hydrolysis of ATP coupled with the electrogenic transport of potassium into the cytoplasm. This subunit binds the extracellular potassium ions and delivers the ions to the membrane domain of KdpB through an intramembrane tunnel. The polypeptide is Potassium-transporting ATPase potassium-binding subunit (Listeria monocytogenes serovar 1/2a (strain ATCC BAA-679 / EGD-e)).